The following is a 404-amino-acid chain: S-adenosylmethionine synthase (404 aa).

Residue H17 coordinates ATP. Residue D19 coordinates Mg(2+). Residue E45 participates in K(+) binding. The L-methionine site is built by E58 and Q101. The tract at residues Q101–Q111 is flexible loop. Residues D177–K179, R244–F245, D253, R259–K260, A276, and K280 contribute to the ATP site. D253 provides a ligand contact to L-methionine. K284 is a binding site for L-methionine.

It belongs to the AdoMet synthase family. As to quaternary structure, homotetramer; dimer of dimers. Mg(2+) is required as a cofactor. It depends on K(+) as a cofactor.

It is found in the cytoplasm. It catalyses the reaction L-methionine + ATP + H2O = S-adenosyl-L-methionine + phosphate + diphosphate. It participates in amino-acid biosynthesis; S-adenosyl-L-methionine biosynthesis; S-adenosyl-L-methionine from L-methionine: step 1/1. In terms of biological role, catalyzes the formation of S-adenosylmethionine (AdoMet) from methionine and ATP. The overall synthetic reaction is composed of two sequential steps, AdoMet formation and the subsequent tripolyphosphate hydrolysis which occurs prior to release of AdoMet from the enzyme. This chain is S-adenosylmethionine synthase, found in Geobacillus thermodenitrificans (strain NG80-2).